A 206-amino-acid polypeptide reads, in one-letter code: Large ribosomal subunit protein uL4 (206 aa).

It belongs to the universal ribosomal protein uL4 family. As to quaternary structure, part of the 50S ribosomal subunit.

In terms of biological role, one of the primary rRNA binding proteins, this protein initially binds near the 5'-end of the 23S rRNA. It is important during the early stages of 50S assembly. It makes multiple contacts with different domains of the 23S rRNA in the assembled 50S subunit and ribosome. Its function is as follows. Forms part of the polypeptide exit tunnel. The polypeptide is Large ribosomal subunit protein uL4 (Bradyrhizobium sp. (strain ORS 278)).